A 147-amino-acid chain; its full sequence is SsrA-binding protein (147 aa).

The protein belongs to the SmpB family.

The protein resides in the cytoplasm. Functionally, required for rescue of stalled ribosomes mediated by trans-translation. Binds to transfer-messenger RNA (tmRNA), required for stable association of tmRNA with ribosomes. tmRNA and SmpB together mimic tRNA shape, replacing the anticodon stem-loop with SmpB. tmRNA is encoded by the ssrA gene; the 2 termini fold to resemble tRNA(Ala) and it encodes a 'tag peptide', a short internal open reading frame. During trans-translation Ala-aminoacylated tmRNA acts like a tRNA, entering the A-site of stalled ribosomes, displacing the stalled mRNA. The ribosome then switches to translate the ORF on the tmRNA; the nascent peptide is terminated with the 'tag peptide' encoded by the tmRNA and targeted for degradation. The ribosome is freed to recommence translation, which seems to be the essential function of trans-translation. The polypeptide is SsrA-binding protein (Mycoplasma pneumoniae (strain ATCC 29342 / M129 / Subtype 1) (Mycoplasmoides pneumoniae)).